Reading from the N-terminus, the 602-residue chain is PEX5-related protein (602 aa).

2 disordered regions span residues 94–140 (VSQT…PETS) and 167–206 (HLMA…LNSE). Residues Ser-181, Ser-229, Ser-233, and Ser-237 each carry the phosphoserine modification. 3 TPR repeats span residues 302–335 (WPGA…DPGN), 336–369 (AEAW…QPNN), and 371–403 (KALM…NPKY). Ser-421 and Ser-423 each carry phosphoserine. TPR repeat units lie at residues 450–483 (PDLQ…RPED), 485–517 (SLWN…QPGF), and 519–551 (RSRY…QRKS).

This sequence belongs to the peroxisomal targeting signal receptor family. As to quaternary structure, forms an obligate 4:4 complex with HCN2. Interacts with RAB8B. Interacts with HCN3. Interacts with HCN4 with a 4:4 HCN4:PEX5L stoichiometry; reduces the effects of cAMP on the voltage-dependence and rate of activation of HCN4. In terms of tissue distribution, brain specific.

The protein localises to the cytoplasm. It localises to the membrane. Accessory subunit of hyperpolarization-activated cyclic nucleotide-gated (HCN) channels, regulating their cell-surface expression and cyclic nucleotide dependence. The polypeptide is PEX5-related protein (Pex5l) (Rattus norvegicus (Rat)).